A 694-amino-acid polypeptide reads, in one-letter code: Katanin p80 WD40 repeat-containing subunit B1 (694 aa).

WD repeat units lie at residues Ala18 to Ser58, Gly61 to Thr100, Gly103 to Arg142, Gly145 to Thr186, His188 to Ser226, and Gly229 to His269. 2 disordered regions span residues Lys319 to Ala410 and Thr470 to Ile492. Over residues Ala327 to Lys349 the composition is skewed to polar residues. Basic and acidic residues predominate over residues Gln350–Ser378. Residues Thr470–Val481 show a composition bias toward low complexity. The segment covering Asn482–Ile492 has biased composition (polar residues).

It belongs to the WD repeat KATNB1 family. As to quaternary structure, interacts with katna1. This interaction enhances the microtubule binding and severing activity of katna1 and also targets this activity to the centrosome.

It is found in the cytoplasm. The protein localises to the cytoskeleton. The protein resides in the microtubule organizing center. Its subcellular location is the centrosome. It localises to the spindle pole. It is found in the spindle. Functionally, participates in a complex which severs microtubules in an ATP-dependent manner. May act to target the enzymatic subunit of this complex to sites of action such as the centrosome. Microtubule severing may promote rapid reorganization of cellular microtubule arrays and the release of microtubules from the centrosome following nucleation. The polypeptide is Katanin p80 WD40 repeat-containing subunit B1 (katnb1) (Danio rerio (Zebrafish)).